Here is a 136-residue protein sequence, read N- to C-terminus: MLAPKKQKFRKAHKGRVASKAKAGTTLAFGSFGLKSIDGWRVTARQIEAGRKAATRCMKRQGRLWIRIFPDVPVSKKPAEVRMGKGKGSPEFFAVRVSPGRIMFEIEGVEENVALRALELASAKLPVRTRIVRRYE.

Belongs to the universal ribosomal protein uL16 family. As to quaternary structure, part of the 50S ribosomal subunit.

Its function is as follows. Binds 23S rRNA and is also seen to make contacts with the A and possibly P site tRNAs. This Rickettsia felis (strain ATCC VR-1525 / URRWXCal2) (Rickettsia azadi) protein is Large ribosomal subunit protein uL16.